A 226-amino-acid chain; its full sequence is MSNRTFQRGDPIGHAFADPALLAQALRHRSAGTPHNERLEFLGDGIVNLLIAEALYHRWPKADEGALTRARAELVREGALAVIGRTLNLGERLTLGPGELKSGGHRRDSILADAVEAIVAAIYLDCGFERCRAVVLPWFEASLAALPVGKAEKDPKTRLQEWLQARQLPLPTYALISESGDEHAKQFHVACILEQPVARAEGQGTSRRLAEQQAATLVIAQLDSNT.

Residues 5 to 127 (TFQRGDPIGH…IVAAIYLDCG (123 aa)) enclose the RNase III domain. Glutamate 40 contacts Mg(2+). Aspartate 44 is an active-site residue. Residues aspartate 113 and glutamate 116 each contribute to the Mg(2+) site. Glutamate 116 is an active-site residue. One can recognise a DRBM domain in the interval 154 to 224 (DPKTRLQEWL…ATLVIAQLDS (71 aa)).

The protein belongs to the ribonuclease III family. As to quaternary structure, homodimer. Mg(2+) serves as cofactor.

The protein localises to the cytoplasm. It carries out the reaction Endonucleolytic cleavage to 5'-phosphomonoester.. In terms of biological role, digests double-stranded RNA. Involved in the processing of primary rRNA transcript to yield the immediate precursors to the large and small rRNAs (23S and 16S). Processes some mRNAs, and tRNAs when they are encoded in the rRNA operon. Processes pre-crRNA and tracrRNA of type II CRISPR loci if present in the organism. The polypeptide is Ribonuclease 3 (Xanthomonas axonopodis pv. citri (strain 306)).